The sequence spans 182 residues: Lipoprotein signal peptidase (182 aa).

Helical transmembrane passes span 12-32 (VAVF…TKAW), 68-88 (ATWV…VAGV), and 91-111 (ISMK…GNLI). Residues Asp127 and Asp140 contribute to the active site. The helical transmembrane segment at 135 to 155 (VGNVADIYLVVAGVVLVILIL) threads the bilayer.

Belongs to the peptidase A8 family.

The protein resides in the cell membrane. It catalyses the reaction Release of signal peptides from bacterial membrane prolipoproteins. Hydrolyzes -Xaa-Yaa-Zaa-|-(S,diacylglyceryl)Cys-, in which Xaa is hydrophobic (preferably Leu), and Yaa (Ala or Ser) and Zaa (Gly or Ala) have small, neutral side chains.. It participates in protein modification; lipoprotein biosynthesis (signal peptide cleavage). In terms of biological role, this protein specifically catalyzes the removal of signal peptides from prolipoproteins. This is Lipoprotein signal peptidase from Bifidobacterium longum subsp. infantis (strain ATCC 15697 / DSM 20088 / JCM 1222 / NCTC 11817 / S12).